A 415-amino-acid chain; its full sequence is ATP-dependent Clp protease ATP-binding subunit ClpX (415 aa).

The ClpX-type ZB domain occupies 1 to 54; sequence MARNRMGGALICSFCNKPESSERFVVPGPGGIAICDRCVDLCESYIKSYKTVRP. Zn(2+) is bound by residues Cys12, Cys15, Cys35, and Cys38. 117–124 is a binding site for ATP; the sequence is PTGSGKTL.

It belongs to the ClpX chaperone family. Component of the ClpX-ClpP complex. Forms a hexameric ring that, in the presence of ATP, binds to fourteen ClpP subunits assembled into a disk-like structure with a central cavity, resembling the structure of eukaryotic proteasomes.

Functionally, ATP-dependent specificity component of the Clp protease. It directs the protease to specific substrates. Can perform chaperone functions in the absence of ClpP. This Treponema denticola (strain ATCC 35405 / DSM 14222 / CIP 103919 / JCM 8153 / KCTC 15104) protein is ATP-dependent Clp protease ATP-binding subunit ClpX.